We begin with the raw amino-acid sequence, 429 residues long: Metacaspase-1A (429 aa).

The segment at 1-68 (MQHHHQGSYG…PQHNGGQMYG (68 aa)) is disordered. Over residues 8-19 (SYGGGGGGGGYP) the composition is skewed to gly residues. Positions 20–45 (GQAYREQNPYGYGQQSPQQGYGAPQQ) are enriched in low complexity. The segment covering 46 to 62 (HNGYNQPPSGYGQPQHN) has biased composition (polar residues). Catalysis depends on residues histidine 220 and cysteine 276.

This sequence belongs to the peptidase C14B family.

Involved in cell death (apoptosis). In Aspergillus clavatus (strain ATCC 1007 / CBS 513.65 / DSM 816 / NCTC 3887 / NRRL 1 / QM 1276 / 107), this protein is Metacaspase-1A (casA).